The following is a 364-amino-acid chain: Methylthioribose-1-phosphate isomerase (364 aa).

The active-site Proton donor is the aspartate 254.

This sequence belongs to the eIF-2B alpha/beta/delta subunits family. MtnA subfamily.

It localises to the cytoplasm. It is found in the nucleus. It catalyses the reaction 5-(methylsulfanyl)-alpha-D-ribose 1-phosphate = 5-(methylsulfanyl)-D-ribulose 1-phosphate. It participates in amino-acid biosynthesis; L-methionine biosynthesis via salvage pathway; L-methionine from S-methyl-5-thio-alpha-D-ribose 1-phosphate: step 1/6. Its function is as follows. Catalyzes the interconversion of methylthioribose-1-phosphate (MTR-1-P) into methylthioribulose-1-phosphate (MTRu-1-P). This is Methylthioribose-1-phosphate isomerase from Drosophila yakuba (Fruit fly).